The chain runs to 152 residues: Mitochondrial fission 1 protein (152 aa).

N-acetylmethionine is present on methionine 1. The Cytoplasmic portion of the chain corresponds to 1-122; sequence MEAVLNELVS…LIDKAMKKDG (122 aa). A Phosphoserine modification is found at serine 10. Residues 71–104 form a TPR repeat; that stretch reads RDYVFYLAVGNYRLKEYEKALKYVRGLLQTEPQN. Residues 123-143 form a helical membrane-spanning segment; it reads LVGMAIVGGMALGVAGLAGLI. Residues 144-152 are Mitochondrial intermembrane-facing; that stretch reads GLAVSKSKS.

This sequence belongs to the FIS1 family. Interacts with DNM1L/DLP1 through the TPR region; may form part of a larger protein complex at the endoplasmic reticulum-mitochondrial interface during mitochondrial fission. Interacts with MARCHF5. Interacts with MIEF1. Interacts with PEX11A, PEX11B and PEX11G. Ubiquitinated by MARCHF5.

The protein resides in the mitochondrion outer membrane. Its subcellular location is the peroxisome membrane. In terms of biological role, involved in the fragmentation of the mitochondrial network and its perinuclear clustering. Plays a minor role in the recruitment and association of the fission mediator dynamin-related protein 1 (DNM1L) to the mitochondrial surface and mitochondrial fission. May not be essential for the assembly of functional fission complexes and the subsequent membrane scission event. Also mediates peroxisomal fission. May act when the products of fission are directed toward mitochondrial homeostasis, mitophagy, or apoptosis. Can induce cytochrome c release from the mitochondrion to the cytosol, ultimately leading to apoptosis. In Rattus norvegicus (Rat), this protein is Mitochondrial fission 1 protein.